We begin with the raw amino-acid sequence, 174 residues long: MAAVVLGGDIMGPERIFPNQTEELGPHQGPTEGTGDWSSEEPEEEQEETGTGPAGYSYQPLNQDPEQEEVELAPVGDGEDVVADIQDRIQALGLHLPDPPLESEDEDEEGATALSNHSSIPMDPEHVELVKRTMAGVSLPAPGVPAWAREISDAQWEDVVQKALQARQATPAWK.

2 disordered regions span residues 1 to 77 and 94 to 123; these read MAAV…PVGD and LHLPDPPLESEDEDEEGATALSNHSSIPMD. 3 stretches are compositionally biased toward acidic residues: residues 38–48, 65–77, and 101–110; these read SSEEPEEEQEE, PEQEEVELAPVGD, and LESEDEDEEG. S103 is modified (phosphoserine).

Its function is as follows. May play an important role in spermatogenesis and/or testis development. The sequence is that of Male-enhanced antigen 1 (MEA1) from Sus scrofa (Pig).